A 418-amino-acid chain; its full sequence is Gamma-glutamyl phosphate reductase (418 aa).

This sequence belongs to the gamma-glutamyl phosphate reductase family.

It is found in the cytoplasm. It carries out the reaction L-glutamate 5-semialdehyde + phosphate + NADP(+) = L-glutamyl 5-phosphate + NADPH + H(+). The protein operates within amino-acid biosynthesis; L-proline biosynthesis; L-glutamate 5-semialdehyde from L-glutamate: step 2/2. Functionally, catalyzes the NADPH-dependent reduction of L-glutamate 5-phosphate into L-glutamate 5-semialdehyde and phosphate. The product spontaneously undergoes cyclization to form 1-pyrroline-5-carboxylate. This chain is Gamma-glutamyl phosphate reductase, found in Teredinibacter turnerae (strain ATCC 39867 / T7901).